Consider the following 122-residue polypeptide: Large ribosomal subunit protein uL14 (122 aa).

Belongs to the universal ribosomal protein uL14 family. Part of the 50S ribosomal subunit. Forms a cluster with proteins L3 and L19. In the 70S ribosome, L14 and L19 interact and together make contacts with the 16S rRNA in bridges B5 and B8.

Its function is as follows. Binds to 23S rRNA. Forms part of two intersubunit bridges in the 70S ribosome. This Desulfovibrio desulfuricans (strain ATCC 27774 / DSM 6949 / MB) protein is Large ribosomal subunit protein uL14.